The following is a 559-amino-acid chain: Membrane protein insertase YidC (559 aa).

The next 6 helical transmembrane spans lie at 5-25 (IVNL…WQYF), 332-352 (AIDF…MNFF), 355-375 (YVGN…LLMF), 429-449 (LPIL…YVTI), 474-494 (LFGL…WPIL), and 520-540 (FMPL…LIYW).

The protein belongs to the OXA1/ALB3/YidC family. Type 1 subfamily. In terms of assembly, interacts with the Sec translocase complex via SecD. Specifically interacts with transmembrane segments of nascent integral membrane proteins during membrane integration.

It localises to the cell inner membrane. In terms of biological role, required for the insertion and/or proper folding and/or complex formation of integral membrane proteins into the membrane. Involved in integration of membrane proteins that insert both dependently and independently of the Sec translocase complex, as well as at least some lipoproteins. Aids folding of multispanning membrane proteins. The sequence is that of Membrane protein insertase YidC from Rickettsia bellii (strain OSU 85-389).